The chain runs to 845 residues: Complement component C7 (845 aa).

The signal sequence occupies residues 1-22; that stretch reads MQVTSLLILVCFIAAFQVFSRA. Residues 27–80 form the TSP type-1 1 domain; that stretch reads NCKWDSYGPWSECNGCTKTQTRRRSVAVYGQYGGYPCEGSAFETQSCKPERGCP. Disulfide bonds link Cys-28–Cys-63, Cys-39–Cys-73, Cys-42–Cys-79, Cys-85–Cys-96, Cys-91–Cys-109, and Cys-103–Cys-119. Residues 84–120 enclose the LDL-receptor class A domain; sequence GCGDRFRCFSGQCISKSLVCNGDPDCEEDGADEDKCE. The MACPF domain occupies 122–456; that stretch reads VANPSCNIDK…EYFDEFDPCH (335 aa). Residue Asn-124 is glycosylated (N-linked (GlcNAc...) asparagine). Cys-127 and Cys-164 are joined by a disulfide. N-linked (GlcNAc...) asparagine glycosylation is present at Asn-201. 21 disulfides stabilise this stretch: Cys-336–Cys-353, Cys-433–Cys-560, Cys-455–Cys-505, Cys-457–Cys-473, Cys-460–Cys-475, Cys-477–Cys-486, Cys-512–Cys-545, Cys-523–Cys-535, Cys-571–Cys-613, Cys-599–Cys-626, Cys-631–Cys-673, Cys-659–Cys-688, Cys-703–Cys-714, Cys-716–Cys-751, Cys-722–Cys-744, Cys-729–Cys-764, Cys-774–Cys-783, Cys-777–Cys-790, Cys-792–Cys-826, Cys-798–Cys-819, and Cys-806–Cys-839. Residues 457–487 form the EGF-like domain; the sequence is CRPCQNGGLAIVVETQCQCLCKPYTFGSACE. The 50-residue stretch at 500-549 folds into the TSP type-1 2 domain; sequence DGGWNCWSSWSPCVQGKRTRSRECNNPPPRDDGKSCLGETTESKQCEDQD. CCP regions lie at residues 545 to 615 and 616 to 693; these read CEDQ…RCGE and DLQW…QKAT. 2 Sushi domains span residues 569-628 and 629-690; these read EFCL…HCQK and LACV…KCVQ. Factor I module (FIM) regions lie at residues 695 to 771 and 772 to 844; these read TPPP…SPAE and KVCG…EEAA. Residue Asn-755 is glycosylated (N-linked (GlcNAc...) asparagine).

The protein belongs to the complement C6/C7/C8/C9 family. Monomer or dimer; as a C5b-7 complex it can also form multimeric rosettes. Component of the membrane attack complex (MAC), composed of complement C5b, C6, C7, C8A, C8B, C8G and multiple copies of the pore-forming subunit C9. Post-translationally, C-, N- and O-glycosylated. O-glycosylated with core 1 or possibly core 8 glycans.

The protein localises to the secreted. Its subcellular location is the target cell membrane. Membrane attack complex (MAC) assembly is inhibited by CD59, thereby protecting self-cells from damage during complement activation. MAC assembly is also inhibited by clusterin (CLU) chaperones that inhibit polymerization of C9. In terms of biological role, component of the membrane attack complex (MAC), a multiprotein complex activated by the complement cascade, which inserts into a target cell membrane and forms a pore, leading to target cell membrane rupture and cell lysis. The MAC is initiated by proteolytic cleavage of C5 into complement C5b in response to the classical, alternative, lectin and GZMK complement pathways. The complement pathways consist in a cascade of proteins that leads to phagocytosis and breakdown of pathogens and signaling that strengthens the adaptive immune system. C7 serves as a membrane anchor. During MAC assembly, associates with C5b and C6 to form the C5b-7 complex, a key lipophilic precursor of the MAC complex, which associates with the outer leaflet and reduces the energy for membrane bending. The protein is Complement component C7 of Mus musculus (Mouse).